The sequence spans 459 residues: ATP synthase subunit beta (459 aa).

ATP is bound at residue 148 to 155; the sequence is GGAGVGKT.

It belongs to the ATPase alpha/beta chains family. In terms of assembly, F-type ATPases have 2 components, CF(1) - the catalytic core - and CF(0) - the membrane proton channel. CF(1) has five subunits: alpha(3), beta(3), gamma(1), delta(1), epsilon(1). CF(0) has three main subunits: a(1), b(2) and c(9-12). The alpha and beta chains form an alternating ring which encloses part of the gamma chain. CF(1) is attached to CF(0) by a central stalk formed by the gamma and epsilon chains, while a peripheral stalk is formed by the delta and b chains.

The protein resides in the cell inner membrane. The catalysed reaction is ATP + H2O + 4 H(+)(in) = ADP + phosphate + 5 H(+)(out). In terms of biological role, produces ATP from ADP in the presence of a proton gradient across the membrane. The catalytic sites are hosted primarily by the beta subunits. In Hahella chejuensis (strain KCTC 2396), this protein is ATP synthase subunit beta.